The sequence spans 193 residues: Xanthine phosphoribosyltransferase (193 aa).

Xanthine is bound by residues Leu20 and Thr27. 128–132 (ANGQA) is a binding site for 5-phospho-alpha-D-ribose 1-diphosphate. Residue Lys156 participates in xanthine binding.

It belongs to the purine/pyrimidine phosphoribosyltransferase family. Xpt subfamily. In terms of assembly, homodimer.

The protein localises to the cytoplasm. It catalyses the reaction XMP + diphosphate = xanthine + 5-phospho-alpha-D-ribose 1-diphosphate. Its pathway is purine metabolism; XMP biosynthesis via salvage pathway; XMP from xanthine: step 1/1. Converts the preformed base xanthine, a product of nucleic acid breakdown, to xanthosine 5'-monophosphate (XMP), so it can be reused for RNA or DNA synthesis. The polypeptide is Xanthine phosphoribosyltransferase (Streptococcus pneumoniae (strain P1031)).